We begin with the raw amino-acid sequence, 390 residues long: Chorismate synthase (390 aa).

Positions 39 and 45 each coordinate NADP(+). Residues 132-134, 253-254, Gly-298, 313-317, and Arg-339 contribute to the FMN site; these read RSS, NA, and KPIPT.

This sequence belongs to the chorismate synthase family. In terms of assembly, homotetramer. It depends on FMNH2 as a cofactor.

The enzyme catalyses 5-O-(1-carboxyvinyl)-3-phosphoshikimate = chorismate + phosphate. Its pathway is metabolic intermediate biosynthesis; chorismate biosynthesis; chorismate from D-erythrose 4-phosphate and phosphoenolpyruvate: step 7/7. Catalyzes the anti-1,4-elimination of the C-3 phosphate and the C-6 proR hydrogen from 5-enolpyruvylshikimate-3-phosphate (EPSP) to yield chorismate, which is the branch point compound that serves as the starting substrate for the three terminal pathways of aromatic amino acid biosynthesis. This reaction introduces a second double bond into the aromatic ring system. This is Chorismate synthase from Bacillus subtilis (strain 168).